The following is a 153-amino-acid chain: MRKDMLLEKVEVLVKPIVEELSYELYYLEYVKENGEYYLRIYIDKEEDSISLNDCEKVSRRVSEILDVEDPIEDSYYLEVSSPGLNRGLYKEEHFKKFIGREVLVRFNGSLEGMKKIQGILKEAENEFITVEGEKELKIPTEKIKGANLEGEI.

This sequence belongs to the RimP family.

It is found in the cytoplasm. Functionally, required for maturation of 30S ribosomal subunits. The chain is Ribosome maturation factor RimP from Clostridium botulinum (strain Alaska E43 / Type E3).